An 82-amino-acid polypeptide reads, in one-letter code: Cytochrome b-c1 complex subunit 8 (82 aa).

Topologically, residues 1 to 43 (MGREFGNLARIRHVISYSLSPFEQRAFPSYFSKGIPNVLRRTR) are mitochondrial matrix. Serine 16 is modified (phosphoserine). Lysine 33 is modified (N6-acetyllysine; alternate). Lysine 33 bears the N6-succinyllysine; alternate mark. The helical transmembrane segment at 44–62 (ERILRVAPPFVVVYLIYTW) threads the bilayer. Topologically, residues 63–82 (GNQEFEQSKRKNPAMYENDK) are mitochondrial intermembrane.

This sequence belongs to the UQCRQ/QCR8 family. As to quaternary structure, component of the ubiquinol-cytochrome c oxidoreductase (cytochrome b-c1 complex, complex III, CIII), a multisubunit enzyme composed of 11 subunits. The complex is composed of 3 respiratory subunits cytochrome b, cytochrome c1 and Rieske protein UQCRFS1, 2 core protein subunits UQCRC1/QCR1 and UQCRC2/QCR2, and 6 low-molecular weight protein subunits UQCRH/QCR6, UQCRB/QCR7, UQCRQ/QCR8, UQCR10/QCR9, UQCR11/QCR10 and subunit 9, the cleavage product of Rieske protein UQCRFS1. The complex exists as an obligatory dimer and forms supercomplexes (SCs) in the inner mitochondrial membrane with NADH-ubiquinone oxidoreductase (complex I, CI) and cytochrome c oxidase (complex IV, CIV), resulting in different assemblies (supercomplex SCI(1)III(2)IV(1) and megacomplex MCI(2)III(2)IV(2)). Interacts with UQCC6.

It localises to the mitochondrion inner membrane. In terms of biological role, component of the ubiquinol-cytochrome c oxidoreductase, a multisubunit transmembrane complex that is part of the mitochondrial electron transport chain which drives oxidative phosphorylation. The respiratory chain contains 3 multisubunit complexes succinate dehydrogenase (complex II, CII), ubiquinol-cytochrome c oxidoreductase (cytochrome b-c1 complex, complex III, CIII) and cytochrome c oxidase (complex IV, CIV), that cooperate to transfer electrons derived from NADH and succinate to molecular oxygen, creating an electrochemical gradient over the inner membrane that drives transmembrane transport and the ATP synthase. The cytochrome b-c1 complex catalyzes electron transfer from ubiquinol to cytochrome c, linking this redox reaction to translocation of protons across the mitochondrial inner membrane, with protons being carried across the membrane as hydrogens on the quinol. In the process called Q cycle, 2 protons are consumed from the matrix, 4 protons are released into the intermembrane space and 2 electrons are passed to cytochrome c. The chain is Cytochrome b-c1 complex subunit 8 (Uqcrq) from Mus musculus (Mouse).